A 713-amino-acid polypeptide reads, in one-letter code: Ribosomal RNA large subunit methyltransferase K/L (713 aa).

Positions leucine 43–phenylalanine 154 constitute a THUMP domain.

This sequence belongs to the methyltransferase superfamily. RlmKL family.

It localises to the cytoplasm. It carries out the reaction guanosine(2445) in 23S rRNA + S-adenosyl-L-methionine = N(2)-methylguanosine(2445) in 23S rRNA + S-adenosyl-L-homocysteine + H(+). The enzyme catalyses guanosine(2069) in 23S rRNA + S-adenosyl-L-methionine = N(2)-methylguanosine(2069) in 23S rRNA + S-adenosyl-L-homocysteine + H(+). Specifically methylates the guanine in position 2445 (m2G2445) and the guanine in position 2069 (m7G2069) of 23S rRNA. This Shewanella sp. (strain ANA-3) protein is Ribosomal RNA large subunit methyltransferase K/L.